The chain runs to 655 residues: Kelch-like protein 13 (655 aa).

Positions 92–161 (CDVTLMPGDT…IYTAKLSLNM (70 aa)) constitute a BTB domain. Residues 196–297 (CVEVGRIANT…TPQELINYVQ (102 aa)) enclose the BACK domain. Kelch repeat units lie at residues 341–389 (HLVT…VIGN), 390–441 (FLYV…ALKG), 442–488 (YLYA…VYGG), 490–535 (MYIS…TVGE), 537–587 (LYVI…VFEN), and 588–636 (KIYV…TLTV).

Component of the BCR(KLHL9-KLHL13) E3 ubiquitin ligase complex, at least composed of CUL3, KLHL9, KLHL13 and RBX1. Interacts with AURKB.

Its pathway is protein modification; protein ubiquitination. In terms of biological role, substrate-specific adapter of a BCR (BTB-CUL3-RBX1) E3 ubiquitin-protein ligase complex required for mitotic progression and cytokinesis. The BCR(KLHL9-KLHL13) E3 ubiquitin ligase complex mediates the ubiquitination of AURKB and controls the dynamic behavior of AURKB on mitotic chromosomes and thereby coordinates faithful mitotic progression and completion of cytokinesis. This is Kelch-like protein 13 (KLHL13) from Homo sapiens (Human).